The chain runs to 303 residues: Y-box-binding protein 1 (303 aa).

Polar residues predominate over residues 1–12; sequence MSSEVETQQQQP. Residues 1-28 form a disordered region; that stretch reads MSSEVETQQQQPDALEGKAGQEPAATVG. In terms of domain architecture, CSD spans 39–103; it reads GTVKWFNVRN…GEKGAEAANV (65 aa). The tract at residues 43-48 is C5-methylcytosine binding; the sequence is WFNVRN. The disordered stretch occupies residues 98 to 303; the sequence is AEAANVTGPE…TPEAEQGGAE (206 aa). A compositionally biased stretch (basic residues) spans 122–132; sequence HYRRYPRRRGP. Low complexity-rich tracts occupy residues 133-143 and 173-187; these read PRNYQQNYQNN and PPYY…RPQY. 2 stretches are compositionally biased toward basic residues: residues 220 to 229 and 258 to 270; these read FRPRFRRGPP and RRYR…RRRR. Residues 271 to 284 are compositionally biased toward basic and acidic residues; it reads PENPKSQDGKETKA.

The protein belongs to the YBX1 family.

The protein localises to the cytoplasm. It is found in the nucleus. It localises to the cytoplasmic granule. Its subcellular location is the secreted. The protein resides in the extracellular exosome. The protein localises to the P-body. In terms of biological role, DNA- and RNA-binding protein involved in various processes, such as translational repression, RNA stabilization, mRNA splicing and transcription regulation. Binds preferentially to the 5'-[CU]CUGCG-3' RNA motif and specifically recognizes mRNA transcripts modified by C5-methylcytosine (m5C). Promotes mRNA stabilization: acts by binding to m5C-containing mRNAs and preventing mRNA decay. Plays a role in the maternal-to-zygotic transition in early embryo by binding to m5C-containing maternal mRNAs and preventing their degradation. Also promotes maternal-to-zygotic transition in oocytes and embryos by promoting translation repression; molecular mechanisms governing translation repression are unknown. Plays a key role in RNA composition of extracellular exosomes by defining the sorting of small non-coding RNAs, such as tRNAs, Y RNAs, Vault RNAs and miRNAs. Probably sorts RNAs in exosomes by recognizing and binding C5-methylcytosine (m5C)-containing RNAs. Acts as a key effector of epidermal progenitors by preventing epidermal progenitor senescence: acts by regulating the translation of a senescence-associated subset of cytokine mRNAs, possibly by binding to m5C-containing mRNAs. Also involved in pre-mRNA alternative splicing regulation: binds to splice sites in pre-mRNA and regulates splice site selection. Also able to bind DNA and regulate transcription. Binds to promoters that contain a Y-box (5'-CTGATTGGCCAA-3'). Promotes separation of DNA strands that contain mismatches or are modified by cisplatin. Has endonucleolytic activity and can introduce nicks or breaks into double-stranded DNA, suggesting a role in DNA repair. The secreted form acts as an extracellular mitogen and stimulates cell migration and proliferation. The polypeptide is Y-box-binding protein 1 (Xenopus laevis (African clawed frog)).